A 117-amino-acid polypeptide reads, in one-letter code: Putative iron-sulfur cluster insertion protein ErpA (117 aa).

The iron-sulfur cluster site is built by cysteine 45, cysteine 109, and cysteine 111.

Belongs to the HesB/IscA family. As to quaternary structure, homodimer. Requires iron-sulfur cluster as cofactor.

Functionally, required for insertion of 4Fe-4S clusters. The polypeptide is Putative iron-sulfur cluster insertion protein ErpA (Chromobacterium violaceum (strain ATCC 12472 / DSM 30191 / JCM 1249 / CCUG 213 / NBRC 12614 / NCIMB 9131 / NCTC 9757 / MK)).